A 90-amino-acid chain; its full sequence is Small ribosomal subunit protein uS17 (90 aa).

The protein belongs to the universal ribosomal protein uS17 family. Part of the 30S ribosomal subunit.

In terms of biological role, one of the primary rRNA binding proteins, it binds specifically to the 5'-end of 16S ribosomal RNA. This chain is Small ribosomal subunit protein uS17, found in Burkholderia multivorans (strain ATCC 17616 / 249).